The sequence spans 246 residues: Sensory transduction protein LytT (246 aa).

The region spanning 3–117 (KVLVVDDEML…RIVQTLKKYK (115 aa)) is the Response regulatory domain. One can recognise an HTH LytTR-type domain in the interval 142 to 246 (LALPIEESIV…AKELKKLLRI (105 aa)).

In terms of processing, phosphorylated by LytS.

It is found in the cytoplasm. Functionally, member of the two-component regulatory system LytS/LytT that probably regulates genes involved in cell wall metabolism. The polypeptide is Sensory transduction protein LytT (lytT) (Bacillus cereus (strain ATCC 14579 / DSM 31 / CCUG 7414 / JCM 2152 / NBRC 15305 / NCIMB 9373 / NCTC 2599 / NRRL B-3711)).